We begin with the raw amino-acid sequence, 310 residues long: Carbamate kinase 1 (310 aa).

Belongs to the carbamate kinase family.

Its subcellular location is the cytoplasm. The enzyme catalyses hydrogencarbonate + NH4(+) + ATP = carbamoyl phosphate + ADP + H2O + H(+). It functions in the pathway metabolic intermediate metabolism; carbamoyl phosphate degradation; CO(2) and NH(3) from carbamoyl phosphate: step 1/1. This chain is Carbamate kinase 1 (arcC1), found in Staphylococcus aureus (strain COL).